The primary structure comprises 474 residues: MTDTHPGVDFMIKPEATSASKIDTAEWPLLLKNFDKLLVRTGHYTPIPCGNNPLKRPIAEYVSSGVINLDKPANPSSHEVVAWVKKILRVEKTGHSGTLDPKVTGCLIICNDRATRLVKSQQSAGKEYVCVLRLHDSVEGERNVASAIETLTGALFQRPPLISAVKRQLRIRSIYESKLIEFDNERNLAVFWASCEAGTYMRTLCVHLGLLLGVGGHMQELRRVRSGCLSENDDIVTMHDVLDAQWIYDNTRDESYLRRVIRPLESLLVGYKRIVVKDSAVNAICYGAKLMIPGLLRYEAGIEVNEEIVLITTKGEAIAVGIAQMSTVELSTCDHGVVAKVKRCIMERDVYPRRWGLGPQSMKKKTLKKEGKLDKYGRPNENTPADWSKSYIDYSDPNAEVAKPAPVVAPAAPTVEAEVNGVEDSKKRKSVESSEKDEDEAAKKEEKRRKKEAKKEKKEKKEKKEKKEKKKKSE.

The active-site Nucleophile is the Asp-100. The region spanning 271-346 (YKRIVVKDSA…VVAKVKRCIM (76 aa)) is the PUA domain. Disordered stretches follow at residues 361–391 (SMKKKTLKKEGKLDKYGRPNENTPADWSKSY) and 406–474 (PVVA…KKSE). Positions 368 to 378 (KKEGKLDKYGR) are enriched in basic and acidic residues. A compositionally biased stretch (low complexity) spans 406–419 (PVVAPAAPTVEAEV). A compositionally biased stretch (basic and acidic residues) spans 423–434 (EDSKKRKSVESS). The segment at 434–468 (SEKDEDEAAKKEEKRRKKEAKKEKKEKKEKKEKKE) is 7 X 3 AA approximate tandem repeats of K-K-E. 7 consecutive repeat copies span residues 443-445 (KKE), 450-452 (KKE), 454-456 (KKE), 457-459 (KKE), 460-462 (KKE), 463-465 (KKE), and 466-468 (KKE). A compositionally biased stretch (basic residues) spans 446-474 (EKRRKKEAKKEKKEKKEKKEKKEKKKKSE).

Belongs to the pseudouridine synthase TruB family. As to quaternary structure, component of the small nucleolar ribonucleoprotein particles containing H/ACA-type snoRNAs (H/ACA snoRNPs).

The protein resides in the nucleus. It is found in the nucleolus. It carries out the reaction uridine in 5S rRNA = pseudouridine in 5S rRNA. The enzyme catalyses uridine in snRNA = pseudouridine in snRNA. The catalysed reaction is a uridine in mRNA = a pseudouridine in mRNA. In terms of biological role, catalytic subunit of H/ACA small nucleolar ribonucleoprotein (H/ACA snoRNP) complex, which catalyzes pseudouridylation of rRNA. This involves the isomerization of uridine such that the ribose is subsequently attached to C5, instead of the normal N1. Pseudouridine ('psi') residues may serve to stabilize the conformation of rRNAs and play a central role in ribosomal RNA processing. The H/ACA snoRNP complex also mediates pseudouridylation of other types of RNAs. Catalyzes pseudouridylation at position 93 in U2 snRNA. Also catalyzes pseudouridylation of mRNAs; H/ACA-type snoRNAs probably guide pseudouridylation of mRNAs. The sequence is that of H/ACA ribonucleoprotein complex subunit cbf5 (cbf5) from Schizosaccharomyces pombe (strain 972 / ATCC 24843) (Fission yeast).